Here is a 119-residue protein sequence, read N- to C-terminus: MAGEEDWIELKFRLADGTDIGPSKYNQSMTVSSLKEKLISQWPKDKENTPKTVNDMKLINAGKILENNRTLAESRLPVCELPGMIITMHIVLRLPTLDKKSEKLQNDPPMKNRCVCTIL.

In terms of domain architecture, Ubiquitin-like spans 8 to 76; that stretch reads IELKFRLADG…NNRTLAESRL (69 aa). A lipid anchor (S-palmitoyl cysteine) is attached at C114. C116 is modified (cysteine methyl ester). C116 carries the S-geranylgeranyl cysteine lipid modification. The propeptide at 117–119 is removed in mature form; sequence TIL.

As to expression, ubiquitous.

Its subcellular location is the cell membrane. In terms of biological role, may serve as docking site to facilitate the association of other proteins to the plasma membrane. This Arabidopsis thaliana (Mouse-ear cress) protein is Membrane-anchored ubiquitin-fold protein 6 (MUB6).